Here is a 24-residue protein sequence, read N- to C-terminus: Acidic phospholipase A2 4 (24 aa).

This sequence belongs to the phospholipase A2 family. Group II subfamily. The cofactor is Ca(2+). Expressed by the venom gland.

The protein resides in the secreted. It carries out the reaction a 1,2-diacyl-sn-glycero-3-phosphocholine + H2O = a 1-acyl-sn-glycero-3-phosphocholine + a fatty acid + H(+). In terms of biological role, PLA2 catalyzes the calcium-dependent hydrolysis of the 2-acyl groups in 3-sn-phosphoglycerides. The protein is Acidic phospholipase A2 4 of Trimeresurus stejnegeri (Chinese green tree viper).